Reading from the N-terminus, the 144-residue chain is Prefoldin subunit alpha (144 aa).

The protein belongs to the prefoldin subunit alpha family. In terms of assembly, heterohexamer of two alpha and four beta subunits.

The protein resides in the cytoplasm. Its function is as follows. Molecular chaperone capable of stabilizing a range of proteins. Seems to fulfill an ATP-independent, HSP70-like function in archaeal de novo protein folding. The chain is Prefoldin subunit alpha from Methanosarcina barkeri (strain Fusaro / DSM 804).